A 496-amino-acid polypeptide reads, in one-letter code: MSTEHMEELNDQQIVRREKMAALREQGIDPFGKRFERTANSQELKDKYANLDKEQLHDKNETATIAGRLVTKRGKGKVGFAHLQDREGQIQIYVRKDAVGEENYEIFKKADLGDFLGVEGEVMRTDMGELSIKATHITHLSKALRPLPEKFHGLTDVETIYRKRYLDLISNRESFERFVTRSKIISEIRRYLDQKGFLEVETPVLHNEAGGAAARPFITHHNAQNIDMVLRIATELHLKRLIVGGMERVYEIGRIFRNEGMDATHNPEFTSIEVYQAYADFQDIMDLTEGIIQHAAKSVKGDGPVNYQGTEIKINEPFKRVHMVDAIREITGVDFWQDMTLEEAKAIAAEKKVPVEKHYTEVGHIINAFFEEFVEETLIQPTFVYGHPVAVSPLAKKNPEDQRFTDRFELFIMTKEYGNAFTELNDPIDQLSRFEAQAKAKELGDDEATGIDYDYIEALEYGMPPTGGLGIGIDRLCMLLTDTTTIRDVLLFPTMK.

Glu409 and Glu416 together coordinate Mg(2+).

It belongs to the class-II aminoacyl-tRNA synthetase family. As to quaternary structure, homodimer. It depends on Mg(2+) as a cofactor.

It is found in the cytoplasm. It carries out the reaction tRNA(Lys) + L-lysine + ATP = L-lysyl-tRNA(Lys) + AMP + diphosphate. The protein is Lysine--tRNA ligase of Streptococcus pneumoniae serotype 19F (strain G54).